The primary structure comprises 197 residues: Xanthine phosphoribosyltransferase (197 aa).

Xanthine-binding residues include Leu-20 and Asn-27. 128-132 (ANGQA) is a 5-phospho-alpha-D-ribose 1-diphosphate binding site. Lys-156 contributes to the xanthine binding site.

This sequence belongs to the purine/pyrimidine phosphoribosyltransferase family. Xpt subfamily. In terms of assembly, homodimer.

The protein localises to the cytoplasm. The catalysed reaction is XMP + diphosphate = xanthine + 5-phospho-alpha-D-ribose 1-diphosphate. Its pathway is purine metabolism; XMP biosynthesis via salvage pathway; XMP from xanthine: step 1/1. In terms of biological role, converts the preformed base xanthine, a product of nucleic acid breakdown, to xanthosine 5'-monophosphate (XMP), so it can be reused for RNA or DNA synthesis. The polypeptide is Xanthine phosphoribosyltransferase (Bacillus cereus (strain ZK / E33L)).